The following is a 364-amino-acid chain: tRNA-specific 2-thiouridylase MnmA 1 (364 aa).

ATP contacts are provided by residues 11 to 18 (GMSGGTDS) and Phe-37. The active-site Nucleophile is Cys-96. Cys-96 and Cys-193 form a disulfide bridge. Residue Gly-120 coordinates ATP. Residues 142–144 (KDQ) are interaction with tRNA. The active-site Cysteine persulfide intermediate is Cys-193. Positions 309–310 (RY) are interaction with tRNA.

The protein belongs to the MnmA/TRMU family.

The protein resides in the cytoplasm. The enzyme catalyses S-sulfanyl-L-cysteinyl-[protein] + uridine(34) in tRNA + AH2 + ATP = 2-thiouridine(34) in tRNA + L-cysteinyl-[protein] + A + AMP + diphosphate + H(+). In terms of biological role, catalyzes the 2-thiolation of uridine at the wobble position (U34) of tRNA, leading to the formation of s(2)U34. The chain is tRNA-specific 2-thiouridylase MnmA 1 from Bacteroides fragilis (strain ATCC 25285 / DSM 2151 / CCUG 4856 / JCM 11019 / LMG 10263 / NCTC 9343 / Onslow / VPI 2553 / EN-2).